A 166-amino-acid polypeptide reads, in one-letter code: NADH-quinone oxidoreductase subunit C (166 aa).

The protein belongs to the complex I 30 kDa subunit family. In terms of assembly, NDH-1 is composed of 14 different subunits. Subunits NuoB, C, D, E, F, and G constitute the peripheral sector of the complex.

The protein resides in the cell inner membrane. The catalysed reaction is a quinone + NADH + 5 H(+)(in) = a quinol + NAD(+) + 4 H(+)(out). NDH-1 shuttles electrons from NADH, via FMN and iron-sulfur (Fe-S) centers, to quinones in the respiratory chain. The immediate electron acceptor for the enzyme in this species is believed to be a menaquinone. Couples the redox reaction to proton translocation (for every two electrons transferred, four hydrogen ions are translocated across the cytoplasmic membrane), and thus conserves the redox energy in a proton gradient. The protein is NADH-quinone oxidoreductase subunit C of Chlorobium phaeobacteroides (strain DSM 266 / SMG 266 / 2430).